Consider the following 309-residue polypeptide: Tagatose-6-phosphate kinase (309 aa).

Belongs to the carbohydrate kinase PfkB family. LacC subfamily.

The catalysed reaction is D-tagatofuranose 6-phosphate + ATP = D-tagatofuranose 1,6-bisphosphate + ADP + H(+). The protein operates within carbohydrate metabolism; D-tagatose 6-phosphate degradation; D-glyceraldehyde 3-phosphate and glycerone phosphate from D-tagatose 6-phosphate: step 1/2. The sequence is that of Tagatose-6-phosphate kinase from Streptococcus pyogenes serotype M1.